The following is a 717-amino-acid chain: Aryl hydrocarbon receptor nuclear translocator 2 (717 aa).

Disordered stretches follow at residues 1-20 and 35-74; these read MATPAAVNPPEMASDIPGSV and MAGAMPARGGKRRSGMDFDDEDGEGPSKFSRENHSEIERR. The residue at position 42 (arginine 42) is an Omega-N-methylarginine. Residues 63–73 are compositionally biased toward basic and acidic residues; sequence FSRENHSEIER. The 54-residue stretch at 63–116 folds into the bHLH domain; that stretch reads FSRENHSEIERRRRNKMTQYITELSDMVPTCSALARKPDKLTILRMAVSHMKSM. PAS domains follow at residues 134–209 and 323–393; these read TEQE…MTGR and PVCM…VKLK. The 44-residue stretch at 398–441 folds into the PAC domain; it reads SVMYRFRTKNREWMLIRTSSFTFQNPYSDEIEYIICTNTNVKQL. The disordered stretch occupies residues 548–717; sequence NDIQSSSSTG…DLGMFPPFSE (170 aa). 2 stretches are compositionally biased toward polar residues: residues 549 to 574 and 585 to 605; these read DIQSSSSTGQNMSQISRQLNQSQVAW and QIPSQSSKTQSSPFGIGTSHT. Positions 610–625 are enriched in low complexity; it reads PSSYSPLSSPATSSPS. Polar residues predominate over residues 642–651; sequence SGQSSGQFQG. Residues 658-680 are compositionally biased toward low complexity; it reads SQWQSQHHGQQSGEQHSHQQPGQ.

Efficient DNA binding requires dimerization with another bHLH protein. Heterodimer with NPAS4. Heterodimer with SIM1. Heterodimer with the aryl hydrocarbon receptor (AHR) or the SIM1 protein. Interacts with TACC3.

The protein resides in the nucleus. Its function is as follows. Transcription factor that plays a role in the development of the hypothalamo-pituitary axis, postnatal brain growth, and visual and renal function. Specifically recognizes the xenobiotic response element (XRE). The chain is Aryl hydrocarbon receptor nuclear translocator 2 (ARNT2) from Homo sapiens (Human).